The following is a 202-amino-acid chain: Small ribosomal subunit protein uS4 (202 aa).

The segment at 22-43 (TRKSARRAYPPGQHGQNRKKRS) is disordered. The S4 RNA-binding domain occupies 90-152 (MRLDNTVFRL…APSRKLVENN (63 aa)).

The protein belongs to the universal ribosomal protein uS4 family. In terms of assembly, part of the 30S ribosomal subunit. Contacts protein S5. The interaction surface between S4 and S5 is involved in control of translational fidelity.

One of the primary rRNA binding proteins, it binds directly to 16S rRNA where it nucleates assembly of the body of the 30S subunit. Its function is as follows. With S5 and S12 plays an important role in translational accuracy. The polypeptide is Small ribosomal subunit protein uS4 (Nostoc sp. (strain PCC 7120 / SAG 25.82 / UTEX 2576)).